Consider the following 168-residue polypeptide: Co-chaperone protein HscB homolog (168 aa).

The 73-residue stretch at 5 to 77 folds into the J domain; the sequence is DYFSLFGLPS…MLRARYLCES (73 aa).

This sequence belongs to the HscB family. Interacts with HscA and stimulates its ATPase activity.

Its function is as follows. Co-chaperone involved in the maturation of iron-sulfur cluster-containing proteins. Seems to help targeting proteins to be folded toward HscA. The chain is Co-chaperone protein HscB homolog from Bordetella avium (strain 197N).